The chain runs to 307 residues: MVKNKAFFGQIMEERDNPAFFKILRREDHSTEMMRMIPHHLIRSISDKSSSFKMVLRVPWGRSWQVKISKNPNFHYMEDRGWNQFVNDNGLGENEYLTFTHEANMCFNVTIFEADGTEMLRPRKTITSSSGRNKREERKSIYKDVKKEEEIESWSESSHPCHKTAESTSGRLTQKQELNLRKKEADKTEKSKTSKKKKVETVSNDSEAGTSSLIPEFKLTIKKSHLLFLGIPKKFVDMHMPTETTMFKIHYPRGKKSWDVTYVVTDVQSRFSGGWSRLAKELGLLVGDVCTFKLIKPTEMRVKVSKE.

A DNA-binding region (TF-B3 1) is located at residues F20–D115. Disordered stretches follow at residues P122–I141 and I151–G209. The span at E166–E177 shows a compositional bias: polar residues. The segment covering L178–K192 has biased composition (basic and acidic residues). The TF-B3 2 DNA-binding region spans I214 to E307.

It localises to the nucleus. The protein is B3 domain-containing protein At5g18000 of Arabidopsis thaliana (Mouse-ear cress).